Consider the following 154-residue polypeptide: General odorant-binding protein 83a (154 aa).

Positions M1 to A33 are cleaved as a signal peptide. Intrachain disulfides connect C55–C86, C82–C133, and C124–C142.

Belongs to the PBP/GOBP family. In terms of tissue distribution, in the ventrolateral region of the antenna, expressed in two distinct types of olfactory hairs: in most sensilla trichodea and in a subset of the small sensilla basiconica (at protein level).

It localises to the secreted. The polypeptide is General odorant-binding protein 83a (Obp83a) (Drosophila melanogaster (Fruit fly)).